Here is a 2004-residue protein sequence, read N- to C-terminus: Alpha-2-macroglobulin homolog (2004 aa).

Positions 1–27 (MLCCLVFKGLLSMDLLRFLLISPFALI) are cleaved as a signal peptide.

It belongs to the protease inhibitor I39 (alpha-2-macroglobulin) family. Bacterial alpha-2-macroglobulin subfamily.

In Yersinia pestis, this protein is Alpha-2-macroglobulin homolog.